A 230-amino-acid polypeptide reads, in one-letter code: Orotate phosphoribosyltransferase (230 aa).

5-phospho-alpha-D-ribose 1-diphosphate is bound by residues arginine 107, lysine 108, lysine 111, histidine 113, and 133-141 (EDLTTAGGS). Threonine 137 serves as a coordination point for orotate.

Belongs to the purine/pyrimidine phosphoribosyltransferase family. PyrE subfamily. In terms of assembly, homodimer. Requires Mg(2+) as cofactor.

The catalysed reaction is orotidine 5'-phosphate + diphosphate = orotate + 5-phospho-alpha-D-ribose 1-diphosphate. It functions in the pathway pyrimidine metabolism; UMP biosynthesis via de novo pathway; UMP from orotate: step 1/2. Its function is as follows. Catalyzes the transfer of a ribosyl phosphate group from 5-phosphoribose 1-diphosphate to orotate, leading to the formation of orotidine monophosphate (OMP). This is Orotate phosphoribosyltransferase from Allorhizobium ampelinum (strain ATCC BAA-846 / DSM 112012 / S4) (Agrobacterium vitis (strain S4)).